The following is a 600-amino-acid chain: Adenine deaminase (600 aa).

This sequence belongs to the metallo-dependent hydrolases superfamily. Adenine deaminase family. Mn(2+) serves as cofactor.

It carries out the reaction adenine + H2O + H(+) = hypoxanthine + NH4(+). This is Adenine deaminase from Bradyrhizobium sp. (strain BTAi1 / ATCC BAA-1182).